The following is a 385-amino-acid chain: Protein pelota homolog (385 aa).

The protein belongs to the eukaryotic release factor 1 family. Pelota subfamily. As to quaternary structure, component of the Pelota-HBS1L complex, also named Dom34-Hbs1 complex, composed of PELO and HBS1L. A divalent metal cation serves as cofactor.

The protein resides in the cytoplasm. Component of the Pelota-HBS1L complex, a complex that recognizes stalled ribosomes and triggers the No-Go Decay (NGD) pathway. In the Pelota-HBS1L complex, PELO recognizes ribosomes stalled at the 3' end of an mRNA and engages stalled ribosomes by destabilizing mRNA in the mRNA channel. Following mRNA extraction from stalled ribosomes by the SKI complex, the Pelota-HBS1L complex promotes recruitment of ABCE1, which drives the disassembly of stalled ribosomes, followed by degradation of damaged mRNAs as part of the NGD pathway. In Gallus gallus (Chicken), this protein is Protein pelota homolog (PELO).